The sequence spans 443 residues: 3-phosphoshikimate 1-carboxyvinyltransferase (443 aa).

Residues Lys24, Ser25, and Arg29 each coordinate 3-phosphoshikimate. Lys24 provides a ligand contact to phosphoenolpyruvate. Phosphoenolpyruvate contacts are provided by Gly96 and Arg124. 4 residues coordinate 3-phosphoshikimate: Ser168, Gln170, Asp316, and Lys343. Phosphoenolpyruvate is bound at residue Gln170. Asp316 serves as the catalytic Proton acceptor. Phosphoenolpyruvate-binding residues include Arg347 and Arg391.

Belongs to the EPSP synthase family. In terms of assembly, monomer.

Its subcellular location is the cytoplasm. It carries out the reaction 3-phosphoshikimate + phosphoenolpyruvate = 5-O-(1-carboxyvinyl)-3-phosphoshikimate + phosphate. It participates in metabolic intermediate biosynthesis; chorismate biosynthesis; chorismate from D-erythrose 4-phosphate and phosphoenolpyruvate: step 6/7. In terms of biological role, catalyzes the transfer of the enolpyruvyl moiety of phosphoenolpyruvate (PEP) to the 5-hydroxyl of shikimate-3-phosphate (S3P) to produce enolpyruvyl shikimate-3-phosphate and inorganic phosphate. This Dichelobacter nodosus (Bacteroides nodosus) protein is 3-phosphoshikimate 1-carboxyvinyltransferase.